Here is a 295-residue protein sequence, read N- to C-terminus: uncharacterized protein (295 aa).

Residues 4-233 (IVVKSMAMEK…LQNTIERLVL (230 aa)) form the Sigma-54 factor interaction domain.

This is an uncharacterized protein from Pseudomonas sp. (strain NS671).